The following is a 523-amino-acid chain: GMP synthase [glutamine-hydrolyzing] (523 aa).

The Glutamine amidotransferase type-1 domain occupies 8 to 205 (KILILDFGSQ…VVDICGCETN (198 aa)). Cys85 serves as the catalytic Nucleophile. Active-site residues include His179 and Glu181. In terms of domain architecture, GMPS ATP-PPase spans 206–398 (WTAENIIEDA…LGLPAEMLNR (193 aa)). 233–239 (SGGVDSS) is an ATP binding site.

As to quaternary structure, homodimer.

It catalyses the reaction XMP + L-glutamine + ATP + H2O = GMP + L-glutamate + AMP + diphosphate + 2 H(+). It participates in purine metabolism; GMP biosynthesis; GMP from XMP (L-Gln route): step 1/1. Functionally, catalyzes the synthesis of GMP from XMP. This Histophilus somni (strain 129Pt) (Haemophilus somnus) protein is GMP synthase [glutamine-hydrolyzing].